Here is a 418-residue protein sequence, read N- to C-terminus: NADH-quinone oxidoreductase subunit D (418 aa).

This sequence belongs to the complex I 49 kDa subunit family. In terms of assembly, NDH-1 is composed of 14 different subunits. Subunits NuoB, C, D, E, F, and G constitute the peripheral sector of the complex.

The protein localises to the cell inner membrane. The enzyme catalyses a quinone + NADH + 5 H(+)(in) = a quinol + NAD(+) + 4 H(+)(out). Functionally, NDH-1 shuttles electrons from NADH, via FMN and iron-sulfur (Fe-S) centers, to quinones in the respiratory chain. The immediate electron acceptor for the enzyme in this species is believed to be ubiquinone. Couples the redox reaction to proton translocation (for every two electrons transferred, four hydrogen ions are translocated across the cytoplasmic membrane), and thus conserves the redox energy in a proton gradient. The polypeptide is NADH-quinone oxidoreductase subunit D (Bordetella pertussis (strain Tohama I / ATCC BAA-589 / NCTC 13251)).